The sequence spans 138 residues: Thyrotropin subunit beta (138 aa).

Positions 1–20 (MTAIFLMSVLFGLACGQAMS) are cleaved as a signal peptide. Disulfide bonds link C22/C72, C36/C87, C39/C125, C47/C103, C51/C105, and C108/C115. N43 carries an N-linked (GlcNAc...) asparagine glycan. Positions 133–138 (VVGLSI) are excised as a propeptide.

The protein belongs to the glycoprotein hormones subunit beta family. In terms of assembly, heterodimer of a common alpha chain and a unique beta chain which confers biological specificity to thyrotropin, lutropin, follitropin and gonadotropin.

It is found in the secreted. In terms of biological role, indispensable for the control of thyroid structure and metabolism. The protein is Thyrotropin subunit beta (TSHB) of Lama glama (Llama).